The following is a 414-amino-acid chain: MEDFAVSFWIYIGVMSIFVGGAVKKFLAFNIGAMPSVVVWLGATLLVERLCALCMPAVLARLVLCVCCWLYFTWATPKPSLPVEDKAVFITGCDSGFGNATAKKLDAMGFEVFATVLNLEGEGAKHLRKVCSSRLTLLQVDITQPQQVQQALLDTKAKLGIRDLWGLVNNAGWCVNIGDAELSLMSNYRGCMEVNFFGTVTVTRTFLPLLRQSKGRIVTISSPSGEHPFPCLASYGASKAALNLFINTLRHELDPWGVKVSTILPSAYKTGQSSNAEYWEKQYKSLLQGLSPNLLEEYGEEYLLETKELFQNYAKTANEDLSPVIDTIVEALLSPQPQVRYYAGPGLILMYFICSYLPLSISDRFLQKLFVQKKVMPRALIKQQGLSPNDNNNSIKENMNDSSSNNSNFTKCID.

The next 4 membrane-spanning stretches (helical) occupy residues 3 to 23 (DFAV…GGAV), 26 to 46 (FLAF…ATLL), 52 to 72 (ALCM…WLYF), and 341 to 361 (YYAG…PLSI). Residues 382-414 (KQQGLSPNDNNNSIKENMNDSSSNNSNFTKCID) are disordered. Residues 384–397 (QGLSPNDNNNSIKE) are compositionally biased toward polar residues.

Belongs to the short-chain dehydrogenases/reductases (SDR) family. As to expression, broadly expressed in peripheral (brain, gill, eye, heart, liver, head kidney, posterior kidney, and gut).

It is found in the membrane. It carries out the reaction an 11beta-hydroxysteroid + NAD(+) = an 11-oxosteroid + NADH + H(+). The enzyme catalyses cortisol + NAD(+) = cortisone + NADH + H(+). The catalysed reaction is corticosterone + NAD(+) = 11-dehydrocorticosterone + NADH + H(+). It catalyses the reaction 11beta,17beta-dihydroxyandrost-4-ene-3-one + NAD(+) = 17beta-hydroxyandrost-4-ene-3,11-dione + NADH + H(+). It carries out the reaction 11beta-hydroxyandrost-4-ene-3,17-dione + NAD(+) = androst-4-ene-3,11,17-trione + NADH + H(+). It participates in steroid metabolism. Its function is as follows. Catalyzes the conversion of biologically active 11beta-hydroxyglucocorticoids (11beta-hydroxysteroid) such as cortisol, to inactive 11-ketoglucocorticoids (11-oxosteroid) such as cortisone, in the presence of NAD(+). Cortisol is the primary glucocorticoid in teleosts and is released to increase glucose bioavailability in order to meet the increased energy demands in response to stress. Functions as a dehydrogenase (oxidase), thereby decreasing the concentration of active glucocorticoids, regulating the hypothalamus-pituitary-interrenal (HPI) axis function in adult fish. Decreasing the excess glucocorticoids may be of relevance to brain function and neural proliferation. Plays a key role by catalyzing the oxidation of 11beta-hydroxytestosterone (11beta,17beta-dihydroxyandrost-4-ene-3-one) to 11-ketotestosterone (17beta-hydroxyandrost-4-ene-3,11-dione), the major fish androgen, that activates androgen receptor transcriptional activity. Catalyzes the conversion of 11beta-hydroxyandrostenedione (11beta-hydroxyandrost-4-ene-3,17-dione) to 11-ketoandrostenedione (androst-4-ene-3,11,17-trione), which can be further metabolized to 11-ketotestosterone. Exerts a dual role in fish by inactivating glucocorticoids and activating androgens. The polypeptide is 11-beta-hydroxysteroid dehydrogenase type 2 (hsd11b2) (Danio rerio (Zebrafish)).